A 489-amino-acid chain; its full sequence is Lysine-specific permease LysP (489 aa).

Topologically, residues 2 to 22 are cytoplasmic; that stretch reads VSETKTTEAPGLRRELKARHL. A helical transmembrane segment spans residues 23-43; it reads TMIAIGGSIGTGLFVASGATI. Over 44–45 the chain is Periplasmic; sequence SQ. Residues 46-66 form a helical membrane-spanning segment; sequence AGPGGALLSYMLIGLMVYFLM. Topologically, residues 67-105 are cytoplasmic; sequence TSLGELAAYMPVSGSFATYGQNYVEEGFGFALGWNYWYN. The chain crosses the membrane as a helical span at residues 106–126; sequence WAVTIAVDLVAAQLVMSWWFP. Over 127–128 the chain is Periplasmic; that stretch reads DT. Residues 129–149 traverse the membrane as a helical segment; it reads PGWIWSALFLGVIFLLNYISV. At 150 to 161 the chain is on the cytoplasmic side; sequence RGFGEAEYWFSL. The chain crosses the membrane as a helical span at residues 162-182; that stretch reads IKVTTVIVFIIVGVLMIIGIF. Topologically, residues 183 to 197 are periplasmic; it reads KGAQPAGWSNWTIGE. Residues 198–218 form a helical membrane-spanning segment; the sequence is APFAGGFAAMIGVAMIVGFSF. Residues 219-244 lie on the Cytoplasmic side of the membrane; it reads QGTELIGIAAGESEDPAKNIPRAVRQ. The chain crosses the membrane as a helical span at residues 245–265; sequence VFWRILLFYVFAILIISLIIP. At 266–290 the chain is on the periplasmic side; it reads YTDPSLLRNDVKDISVSPFTLVFQH. The chain crosses the membrane as a helical span at residues 291-311; that stretch reads AGLLSAAAVMNAVILTAVLSA. Topologically, residues 312-346 are cytoplasmic; that stretch reads GNSGMYASTRMLYTLACDGKAPRIFAKLSRGGVPR. A helical membrane pass occupies residues 347-367; sequence NALYATTVIAGLCFLTSMFGN. Topologically, residues 368-370 are periplasmic; it reads QTV. Residues 371 to 391 form a helical membrane-spanning segment; that stretch reads YLWLLNTSGMTGFIAWLGIAI. Topologically, residues 392–413 are cytoplasmic; it reads SHYRFRRGYVLQGHDINDLPYR. A helical transmembrane segment spans residues 414 to 434; it reads SGFFPLGPIFAFILCLIITLG. Topologically, residues 435 to 446 are periplasmic; that stretch reads QNYEAFLKDTID. A helical transmembrane segment spans residues 447–467; the sequence is WGGVAATYIGIPLFLIIWFGY. At 468 to 489 the chain is on the cytoplasmic side; the sequence is KLIKGTHFVRYSEMKFPQNDKK.

It belongs to the amino acid-polyamine-organocation (APC) superfamily. Amino acid transporter (AAT) (TC 2.A.3.1) family. In terms of assembly, interacts strongly with the transcriptional activator CadC in the absence of lysine or at low lysine concentrations. Interaction is markedly attenuated under increasing lysine levels. Concomitant pH-dependent protonation of periplasmic amino acids in both proteins dissolves their electrostatic connections resulting in further destabilization of the CadC/LysP interaction. Low pH promotes oligomerization of LysP.

It is found in the cell inner membrane. The catalysed reaction is L-lysine(out) + H(+)(out) = L-lysine(in) + H(+)(in). Permease involved in lysine uptake. In addition, functions as a lysine sensor that mediates the lysine-dependent regulation of the transcriptional activator CadC. In the absence of lysine, or at low lysine concentrations, LysP inhibits CadC by an interaction with the transmembrane domain of CadC. In the presence of lysine, LysP loses its ability to interact with and inhibit CadC, and acts as a lysine permease. The polypeptide is Lysine-specific permease LysP (Escherichia coli (strain K12)).